We begin with the raw amino-acid sequence, 146 residues long: 3-dehydroquinate dehydratase (146 aa).

Residue tyrosine 22 is the Proton acceptor of the active site. Asparagine 73, histidine 79, and aspartate 86 together coordinate substrate. Histidine 99 serves as the catalytic Proton donor. Residues 100–101 (IS) and arginine 110 each bind substrate.

Belongs to the type-II 3-dehydroquinase family. In terms of assembly, homododecamer.

The enzyme catalyses 3-dehydroquinate = 3-dehydroshikimate + H2O. Its pathway is metabolic intermediate biosynthesis; chorismate biosynthesis; chorismate from D-erythrose 4-phosphate and phosphoenolpyruvate: step 3/7. Functionally, catalyzes a trans-dehydration via an enolate intermediate. The sequence is that of 3-dehydroquinate dehydratase from Prochlorococcus marinus (strain MIT 9515).